Reading from the N-terminus, the 137-residue chain is Small ribosomal subunit protein uS12 (137 aa).

Residues 1–43 form a disordered region; it reads MPTINQLVRKGRVSKTKKSDSPALNKGYNSFKKRMTDQNAPQK.

It belongs to the universal ribosomal protein uS12 family. Part of the 30S ribosomal subunit. Contacts proteins S8 and S17. May interact with IF1 in the 30S initiation complex.

Its function is as follows. With S4 and S5 plays an important role in translational accuracy. Functionally, interacts with and stabilizes bases of the 16S rRNA that are involved in tRNA selection in the A site and with the mRNA backbone. Located at the interface of the 30S and 50S subunits, it traverses the body of the 30S subunit contacting proteins on the other side and probably holding the rRNA structure together. The combined cluster of proteins S8, S12 and S17 appears to hold together the shoulder and platform of the 30S subunit. In Oceanobacillus iheyensis (strain DSM 14371 / CIP 107618 / JCM 11309 / KCTC 3954 / HTE831), this protein is Small ribosomal subunit protein uS12.